The primary structure comprises 273 residues: Lactose transport system permease protein LacG (273 aa).

A run of 6 helical transmembrane segments spans residues 15–35 (YSVLSLAAFLSIFPFIWMVIG), 77–97 (IALVGTALTLLVSSLAGYGFE), 110–130 (VILLTLMVPFAALMIPLFMLM), 134–154 (GLLNTHIAIMLPMIASAFIIF), 182–204 (FFYIYVPVMRSTYAAAFVIVFML), and 240–260 (GTVMIGTILATLPTLLVFFAM). One can recognise an ABC transmembrane type-1 domain in the interval 71–260 (FWNSVKIALV…LPTLLVFFAM (190 aa)).

Belongs to the binding-protein-dependent transport system permease family. MalFG subfamily.

It localises to the cell inner membrane. Its function is as follows. Part of the binding-protein-dependent transport system for lactose. Probably responsible for the translocation of the substrate across the membrane. This chain is Lactose transport system permease protein LacG (lacG), found in Rhizobium radiobacter (Agrobacterium tumefaciens).